Consider the following 370-residue polypeptide: uncharacterized protein (370 aa).

It belongs to the metallo-dependent hydrolases superfamily.

This is an uncharacterized protein from Mycobacterium bovis (strain ATCC BAA-935 / AF2122/97).